Consider the following 244-residue polypeptide: 7-cyano-7-deazaguanine synthase (244 aa).

14-24 (FSGGQDSATCV) serves as a coordination point for ATP. Zn(2+) contacts are provided by Cys202, Cys217, Cys220, and Cys223.

This sequence belongs to the QueC family. Zn(2+) serves as cofactor.

The enzyme catalyses 7-carboxy-7-deazaguanine + NH4(+) + ATP = 7-cyano-7-deazaguanine + ADP + phosphate + H2O + H(+). It functions in the pathway purine metabolism; 7-cyano-7-deazaguanine biosynthesis. Functionally, catalyzes the ATP-dependent conversion of 7-carboxy-7-deazaguanine (CDG) to 7-cyano-7-deazaguanine (preQ(0)). The protein is 7-cyano-7-deazaguanine synthase of Burkholderia lata (strain ATCC 17760 / DSM 23089 / LMG 22485 / NCIMB 9086 / R18194 / 383).